We begin with the raw amino-acid sequence, 119 residues long: Large ribosomal subunit protein bL20 (119 aa).

It belongs to the bacterial ribosomal protein bL20 family.

In terms of biological role, binds directly to 23S ribosomal RNA and is necessary for the in vitro assembly process of the 50S ribosomal subunit. It is not involved in the protein synthesizing functions of that subunit. The chain is Large ribosomal subunit protein bL20 from Xanthomonas oryzae pv. oryzae (strain KACC10331 / KXO85).